The sequence spans 811 residues: Receptor-like protein 52 (811 aa).

The N-terminal stretch at Met1 to Ser22 is a signal peptide. Residues Gln23 to Thr770 are Extracellular-facing. N-linked (GlcNAc...) asparagine glycosylation is found at Asn47, Asn64, Asn74, Asn93, Asn109, and Asn124. LRR repeat units follow at residues Ala62–Phe86, Pro87–Cys110, Lys112–Leu134, Ala135–Ile159, Lys161–Leu183, and Ser184–Lys208. The LRR 7; degenerate repeat unit spans residues Lys211–Asn233. N-linked (GlcNAc...) asparagine glycosylation is found at Asn233, Asn246, Asn260, Asn295, and Asn304. LRR repeat units follow at residues Met234 to Leu258, Asn260 to Ala281, Lys282 to Leu305, Asn307 to Leu329, Pro330 to Ser354, Leu356 to Gly377, Lys379 to Cys401, and Thr403 to Asn427. N-linked (GlcNAc...) asparagine glycosylation is found at Asn389, Asn422, Asn429, Asn455, Asn464, and Asn485. LRR repeat units follow at residues Leu441–Leu465, Ser466–Ser489, Lys491–Ile511, Ser512–Gln537, Gln539–Phe557, Ser558–Asn581, Leu625–Leu649, Lys650–Leu673, Ile674–Leu697, and Tyr699–Thr722. N-linked (GlcNAc...) asparagine glycosylation occurs at Asn525. N-linked (GlcNAc...) asparagine glycans are attached at residues Asn571 and Asn581. Asn656 carries an N-linked (GlcNAc...) asparagine glycan. N-linked (GlcNAc...) asparagine glycosylation is present at Asn704. Residues Ala771–Val791 form a helical membrane-spanning segment. Residues Ser792–Ile811 are Cytoplasmic-facing.

The protein belongs to the RLP family.

The protein resides in the cell membrane. In terms of biological role, required for defense against powdery mildew pathogen. This Arabidopsis thaliana (Mouse-ear cress) protein is Receptor-like protein 52.